The chain runs to 826 residues: MWALCSLLRSAAGRTMSQGRTISQAPARRERPRKDPLRHLRTREKRGPSGCSGGPNTVYLQVVAAGSRDSGAALYVFSEFNRYLFNCGEGVQRLMQEHKLKVARLDNIFLTRMHWSNVGGLSGMILTLKETGLPKCVLSGPPQLEKYLEAIKIFSGPLKGIELAVRPHSAPEYEDETMTVYQIPIHSEQRRGKHQPWQSPERPLSRLSPERSSDSESNENEPHLPHGVSQRRGVRDSSLVVAFICKLHLKRGNFLVLKAKEMGLPVGTAAIAPIIAAVKDGKSITHEGREILAEELCTPPDPGAAFVVVECPDESFIQPICENATFQRYQGKADAPVALVVHMAPASVLVDSRYQQWMERFGPDTQHLVLNENCASVHNLRSHKIQTQLNLIHPDIFPLLTSFRCKKEGPTLSVPMVQGECLLKYQLRPRREWQRDAIITCNPEEFIVEALQLPNFQQSVQEYRRSAQDGPAPAEKRSQYPEIIFLGTGSAIPMKIRNVSATLVNISPDTSLLLDCGEGTFGQLCRHYGDQVDRVLGTLAAVFVSHLHADHHTGLPSILLQRERALASLGKPLHPLLVVAPNQLKAWLQQYHNQCQEVLHHISMIPAKCLQEGAEISSPAVERLISSLLRTCDLEEFQTCLVRHCKHAFGCALVHTSGWKVVYSGDTMPCEALVRMGKDATLLIHEATLEDGLEEEAVEKTHSTTSQAISVGMRMNAEFIMLNHFSQRYAKVPLFSPNFSEKVGVAFDHMKVCFGDFPTMPKLIPPLKALFAGDIEEMEERREKRELRQVRAALLSRELAGGLEDGEPQQKRAHTEEPQAKKVRAQ.

The N-terminal 16 residues, 1 to 16 (MWALCSLLRSAAGRTM), are a transit peptide targeting the mitochondrion. Disordered stretches follow at residues 16–51 (MSQG…PSGC) and 188–231 (EQRR…VSQR). The segment covering 27-38 (ARRERPRKDPLR) has biased composition (basic and acidic residues). 6 positions are modified to phosphoserine: serine 199, serine 208, serine 212, serine 229, serine 618, and serine 736. Residues 208 to 224 (SPERSSDSESNENEPHL) show a composition bias toward basic and acidic residues. Residues 798 to 826 (ELAGGLEDGEPQQKRAHTEEPQAKKVRAQ) form a disordered region. Residues 808–820 (PQQKRAHTEEPQA) show a composition bias toward basic and acidic residues.

Belongs to the RNase Z family. In terms of assembly, homodimer. Interacts with PTCD1. The cofactor is Zn(2+). In terms of tissue distribution, widely expressed. Highly expressed in heart, placenta, liver, skeletal muscle, kidney, pancreas, testis and ovary. Weakly expressed in brain, lung, spleen, thymus, prostate, small intestine, colon and leukocytes.

It is found in the mitochondrion. It localises to the mitochondrion matrix. The protein localises to the mitochondrion nucleoid. The protein resides in the nucleus. The enzyme catalyses Endonucleolytic cleavage of RNA, removing extra 3' nucleotides from tRNA precursor, generating 3' termini of tRNAs. A 3'-hydroxy group is left at the tRNA terminus and a 5'-phosphoryl group is left at the trailer molecule.. Its function is as follows. Zinc phosphodiesterase, which displays mitochondrial tRNA 3'-processing endonuclease activity. Involved in tRNA maturation, by removing a 3'-trailer from precursor tRNA. Associates with mitochondrial DNA complexes at the nucleoids to initiate RNA processing and ribosome assembly. The protein is Zinc phosphodiesterase ELAC protein 2 (ELAC2) of Homo sapiens (Human).